Reading from the N-terminus, the 319-residue chain is MSRIVTYSPAYTIVPTYECFNNCSYCNFRSDPGKSSWLSLSEAEKQLLSLKNKGTIEILTLSGEVHPNSKYRKAWFQLIYKLCQLALSLGFLPHTNVGILTRSEMEELKQVNVSMGLMLEQITPKLLKIVHKNSPSKIPHLRLQQLEWAGELRIPFTTGLLLGIGETVTDWKDTLEAISNIHQKWGHIQEVIIQPYSPGSENKWVSDGFNVNLLPEVIAIANEVLPSNITLQIPPNLVKKPEILLACLENGARDLGGIGPFDEINPDYPHPHYQALIKVLESRGWQLTKRLPVYSKYDDWLPINLKNIVSEWRIKLSIY.

A Radical SAM core domain is found at 5–236; it reads VTYSPAYTIV…SNITLQIPPN (232 aa). Cysteine 19, cysteine 23, and cysteine 26 together coordinate [4Fe-4S] cluster.

It belongs to the radical SAM superfamily. CofG family. Consists of two subunits, CofG and CofH. The cofactor is [4Fe-4S] cluster.

The catalysed reaction is 5-amino-5-(4-hydroxybenzyl)-6-(D-ribitylimino)-5,6-dihydrouracil + S-adenosyl-L-methionine = 7,8-didemethyl-8-hydroxy-5-deazariboflavin + 5'-deoxyadenosine + L-methionine + NH4(+) + H(+). Its pathway is cofactor biosynthesis; coenzyme F0 biosynthesis. Catalyzes the radical-mediated synthesis of 7,8-didemethyl-8-hydroxy-5-deazariboflavin from 5-amino-5-(4-hydroxybenzyl)-6-(D-ribitylimino)-5,6-dihydrouracil. In Trichodesmium erythraeum (strain IMS101), this protein is 7,8-didemethyl-8-hydroxy-5-deazariboflavin synthase.